The primary structure comprises 414 residues: MNAEIIAVGSELLLGQIANTNAQFLSQQLAMLGINVYFHTVVGDNAGRLEQAVKTAQTRANLIIFTGGLGPTKDDLTKETIARLLGRRLVIDEEALRAIEVYFARTNRPMTENNKKQALVLEGSTVLKNEHGMAPGMALVADGITYMLLPGPPKEMRPMFKKYGNAFLRRTFSLSERIESRVLRFFGIGESALETAIADLIDAQSNPTIAPLAGDGEVTLRLTAKHQDEAEAKRLLDEVESAILARVGRHCYGYNDETLFTKTLERLKERGWTIASAESLTGGLFLEQLTALPGASQVVQGGVVCYTNGVKEQVLGIPRPLLEAEGAVSEPCARLLAENVRAMCDADIGISFTGVAGPDPLEGHPPGTVYIGIAVRGRDATVHRLMLSGTRDAIRIRTAKYGCFFLLEMLAADC.

The protein belongs to the CinA family.

In Geobacillus kaustophilus (strain HTA426), this protein is Putative competence-damage inducible protein.